The chain runs to 267 residues: MNALLTNPFKERLRKGEVQIGLWLSSTTAYMAEIAATSGYDWLLIDGEHAPNTIQDLYHQLQAVAPYASQPVIRPVEGSKPLIKQVLDIGAQTLLIPMVDTADQARQVVSATRYPPYGERGVGASVARAARWGRIENYMAQVNDSLCLLVQVESKTALDNLDEILDVEGIDGVFIGPADLSASLGYPDNAGHPEVQRIIETSIRRIRAAGKAAGFLAVAPDMAQQCLAWGANFVAVGVDTMLYSDALDQRLAMFKSGKNGPRIKGSY.

The active-site Proton acceptor is the H49. Q151 provides a ligand contact to substrate. Residue E153 participates in Mg(2+) binding. Positions 178 and 179 each coordinate substrate. D179 contributes to the Mg(2+) binding site.

The protein belongs to the HpcH/HpaI aldolase family. KDR aldolase subfamily. As to quaternary structure, homohexamer. Mg(2+) serves as cofactor.

It catalyses the reaction 2-dehydro-3-deoxy-L-rhamnonate = (S)-lactaldehyde + pyruvate. Functionally, catalyzes the reversible retro-aldol cleavage of 2-keto-3-deoxy-L-rhamnonate (KDR) to pyruvate and lactaldehyde. The chain is 2-keto-3-deoxy-L-rhamnonate aldolase from Escherichia coli O157:H7.